A 2177-amino-acid polypeptide reads, in one-letter code: MKGLGVPAAALLWGGLSALLPPSLPADDVSPYFKTEPVRSQVHLEGNRLVLTCMAEGSWPLEFKWLHNSRELTKFSLEYRYMITSLDRTHAGFYRCIVRNRMGALLQRQTEVQVAYMGSFEDSETQQSVSHGEAAVIRAPRIASFPQPQVTWFRDGRKISPSSRIAITLENTLVILSTVAPDAGRYYVQAVNDKNGDNKTSQPITLTVANVGGPADPIAPTIIVPPRNTSVVAGTSEVTMECVANARPLIKLHIIWKKDGVPISSGISDYSRRLTILNPTLGDSGYYECEAVLRSSSVPAVAEGAYLSVLEPPQFVKEPERHITAEMEKVVAIPCQAKGVPPPDMAWYKDASLIHPEQLSRFQLLADGSLQISGLLPDDTGMFQCFARNAAGEVQTTTYLAVTSIAPNITRGPQDSTVIDGMSVILNCETSGAPRPAITWQKGERILASGSVQLPRFTLLESGSLLVSPAHLTDAGTYTCLATNSRGVDEASADLVVWARTRITDPPQDQSVIKGTKASMSCGVTHDPSVDVRYIWEKDGAPLGTESGPRLRLDETGTLHISQTWSGDIGTYTCKVLSAGGNDSRSAHLRVRQLPHAPESPVAVLSPLEKRAINLTWAKPFDGNSPLLRYLVEISENNAPWTVLLASVDPELTWVVVRGLVPARSYQFRLCAVNDVGRSQFSKDTERVSLPEEPPFAPPQNVIASGRTNQSIMIQWQPPPESHQNGVLKGYIIRYCLAGLPVGYQFKNITNADVNNLLLEDLIIWTNYEIEVAAYNSAGLGVYSMKVTEWTLQGVPTVPPGNVQTEATNSTTIRFTWNPPSPQFINGINQGYKLIAWEPEHEEEATVVTVRPNFQDSVHVGYVVGLKKFTEYLTSVLCFTTPGDGPRSPPQLVRTHEDVPGPVGHLSFSEILDTSLKVSWQEPLEKNGILTGYRISWEEYNRTNTRVTHYLPNVTLEYRVTGLTALTTYTIEVAAMTSKGQGQVSSSTISSGVPPELPGAPTNLGISNIGPRSVTLQFRPGYDGKTSISRWQVEAQVGQNGEAEEWGLVHQLANEPDARSLEVPNLNPYTYYSFRMRQVNIVGTSPPSLPSRRIQTLQAPPDVAPANVTLRTASETSLWLRWMPLLEQEYNGNPDSVGYRIRYLRSDGQGRAVVHVIHDRVEREYTIEDLEEWTEYRVQVQAFNAIGSGPWSHLVLGRTRESVPSSGPSNVSAQATSSSNMLVRWSDIPEADCNGLILGYKVMFKEKDSEARAQFWLAEGNTSRSAQLTGLGKFMLYEIRVLAFTRIGDGVPSRPPILERTLDDVPGPPVGMLFPEVRTTSVRLIWQPPTAPNGIILAYQLTHRLNTTTANAAVSEVLGPSTRQYTATGLQPEATYLFSITAQTRKGWGEAAEALVVTTEKRDRPQPPSKPLVRQEDVRARSVLLSWEPGSDGLSPVRFYTVQTRELPSGEWALHPASISHNATAFVVDRLKPFTSYKFRVKATNDIGDSEYSEESESLTTLQAAPEEAPTILSVTPHTTTSVLIRWQPPSEDKINGILLGFRLRYRELLYDSLRGFTLHGIGNPGATWAELTPVYAVHNLSEVSLTQYELDNLSKHRRYEIRMSVYNAVGEGPPSPPQEVFVGEAMPTGAPQNVAVKAATATQLDVTWEPPPTESQNGDIQGYKIHFWEAQRQNESARVKTLFLPETGVKLKNLTGYTSYWVSIAAFNAAGDGPRSTPVTARTQQAAPSAPGSIRFSELTTTSVNVSWEPPPLPNGILEGYRLVYEPCMPVDGVSKIVTVDVKGNSPLWMKVKDLAEGITYRFRIRAKTFAYGPDVEANITTGPGEGAPGPPGEPFISRYGSAITIHWTSGDPGQGPITRYVIEARPSDEGLWDILIKDIPKEVTSYTFSMDILKQGVSYDFRVIAVNDYGYGTPSTPSPSVSAQKANPFYEEWWFLVVIALVGLIFILLLVFVLIIRGQSKKYAKKSDSGNGSKANALTHGEMVSLDESSFPALELNNRRLSVKNSFCRKNGIYTRSPPRPSPGSLHYSDEDVTKYNDLIPAESSSLTEKPSEVSDSQGSDSEYEVDPAHQKAHSFVNHYISDPTYYNSWRRQQKGISRAQAYSYTESDSGEPDHTPLSNSTSTQQGSLFRPKASRIPTPQTPGNPPSQPGTLYRPPSSLAPGSRAPIGGFSSFV.

Positions 1-26 are cleaved as a signal peptide; that stretch reads MKGLGVPAAALLWGGLSALLPPSLPA. Over 27-1937 the chain is Extracellular; that stretch reads DDVSPYFKTE…ANPFYEEWWF (1911 aa). Ig-like C2-type domains lie at 31–113, 118–205, 220–299, 313–401, 407–496, and 501–590; these read PYFK…TEVQ, GSFE…QPIT, PTII…SSVP, PQFV…TYLA, PNIT…ADLV, and TRIT…AHLR. The cysteines at positions 53 and 96 are disulfide-linked. 2 N-linked (GlcNAc...) asparagine glycosylation sites follow: N198 and N228. 2 cysteine pairs are disulfide-bonded: C242-C289 and C335-C385. An N-linked (GlcNAc...) asparagine glycan is attached at N408. Disulfide bonds link C428/C480 and C522/C574. N582, N614, N709, N748, N809, N941, and N953 each carry an N-linked (GlcNAc...) asparagine glycan. 13 Fibronectin type-III domains span residues 597 to 693, 698 to 794, 799 to 898, 902 to 996, 1000 to 1099, 1104 to 1202, 1207 to 1304, 1305 to 1402, 1407 to 1504, 1509 to 1626, 1631 to 1727, 1731 to 1826, and 1829 to 1928; these read APES…LPEE, PPQN…TLQG, PPGN…THED, PVGH…VPPE, APTN…TLQA, APAN…TRES, GPSN…TLDD, VPGP…TEKR, PPSK…TLQA, APTI…VGEA, APQN…TQQA, APGS…TGPG, and APGP…AQKA. Residues N1107, N1210, N1261, N1346, N1462, N1580, N1593, N1675, N1694, N1746, and N1820 are each glycosylated (N-linked (GlcNAc...) asparagine). Residues 1938–1958 form a helical membrane-spanning segment; it reads LVVIALVGLIFILLLVFVLII. Residues 1959–2177 lie on the Cytoplasmic side of the membrane; sequence RGQSKKYAKK…APIGGFSSFV (219 aa). Disordered regions lie at residues 2044 to 2071 and 2103 to 2177; these read AESS…VDPA and QAYS…SSFV. 2 stretches are compositionally biased toward polar residues: residues 2045–2063 and 2119–2130; these read ESSS…QGSD and PLSNSTSTQQGS. A compositionally biased stretch (pro residues) spans 2142-2151; sequence PQTPGNPPSQ. Residues 2171–2177 carry the PDZ-binding motif; the sequence is GGFSSFV.

This sequence belongs to the sidekick family. Homodimer; mediates homophilic interactions to promote cell adhesion. As to expression, expressed by non-overlapping subsets of retinal neurons. SDK1, SDK2, DSCAM and DSCAML1 are expressed in non-overlapping subsets of interneurons and retinal ganglion cells (RGCs) that form synapses in distinct inner plexiform layer (IPL) sublaminae.

It is found in the cell membrane. It localises to the synapse. In terms of biological role, adhesion molecule that promotes lamina-specific synaptic connections in the retina. Expressed in specific subsets of interneurons and retinal ganglion cells (RGCs) and promotes synaptic connectivity via homophilic interactions. This Gallus gallus (Chicken) protein is Protein sidekick-2.